Here is a 359-residue protein sequence, read N- to C-terminus: Putative nucleotidyltransferase MAB21L1 (359 aa).

A ribonucleoside 5'-triphosphate is bound by residues 23–24 (RK) and 63–66 (YEGL). E73 and E75 together coordinate Mg(2+). A ribonucleoside 5'-triphosphate is bound by residues K248 and 252-255 (SLLK).

It belongs to the mab-21 family. Monomer. Homodecamer; composed of 2 back to back homopentamers. The protein may exist as monomer in solution and oiligomerizes upon ligand binding.

The protein resides in the nucleus. Functionally, putative nucleotidyltransferase required for several aspects of embryonic development including normal development of the eye. It is unclear whether it displays nucleotidyltransferase activity in vivo. Binds single-stranded RNA (ssRNA). The chain is Putative nucleotidyltransferase MAB21L1 (mab21l1) from Xenopus laevis (African clawed frog).